The primary structure comprises 487 residues: Betaine aldehyde dehydrogenase 1 (487 aa).

K(+)-binding residues include Ser-26, Ile-27, and Asp-93. Gly-150 to Trp-152 contributes to the NAD(+) binding site. The Charge relay system role is filled by Lys-162. NAD(+) is bound by residues Lys-176–Glu-179 and Ser-229–Thr-232. Residue Leu-244 participates in K(+) binding. Glu-250 (proton acceptor) is an active-site residue. Residues Gly-252, Cys-284, and Glu-384 each contribute to the NAD(+) site. Residue Cys-284 is the Nucleophile of the active site. Cys-284 bears the Cysteine sulfenic acid (-SOH) mark. K(+)-binding residues include Lys-454 and Gly-457. Residue Glu-461 is the Charge relay system of the active site.

It belongs to the aldehyde dehydrogenase family. In terms of assembly, dimer of dimers. K(+) is required as a cofactor.

It carries out the reaction betaine aldehyde + NAD(+) + H2O = glycine betaine + NADH + 2 H(+). The protein operates within amine and polyamine biosynthesis; betaine biosynthesis via choline pathway; betaine from betaine aldehyde: step 1/1. In terms of biological role, involved in the biosynthesis of the osmoprotectant glycine betaine. Catalyzes the irreversible oxidation of betaine aldehyde to the corresponding acid. The polypeptide is Betaine aldehyde dehydrogenase 1 (Rhizobium meliloti (strain 1021) (Ensifer meliloti)).